Consider the following 70-residue polypeptide: DNA gyrase inhibitor YacG (70 aa).

Cys7, Cys10, Cys26, and Cys30 together coordinate Zn(2+).

It belongs to the DNA gyrase inhibitor YacG family. In terms of assembly, interacts with GyrB. The cofactor is Zn(2+).

In terms of biological role, inhibits all the catalytic activities of DNA gyrase by preventing its interaction with DNA. Acts by binding directly to the C-terminal domain of GyrB, which probably disrupts DNA binding by the gyrase. The sequence is that of DNA gyrase inhibitor YacG from Shewanella woodyi (strain ATCC 51908 / MS32).